A 184-amino-acid chain; its full sequence is Large ribosomal subunit protein bL9 (184 aa).

The interval 160–184 (LQNQKSEQQEAEQDANKEAADGDDS) is disordered. A compositionally biased stretch (basic and acidic residues) spans 173–184 (DANKEAADGDDS).

It belongs to the bacterial ribosomal protein bL9 family.

Its function is as follows. Binds to the 23S rRNA. The sequence is that of Large ribosomal subunit protein bL9 from Wolbachia sp. subsp. Drosophila simulans (strain wRi).